The following is a 224-amino-acid chain: Ribose-5-phosphate isomerase A (224 aa).

Substrate-binding positions include 26-29, 82-85, and 95-98; these read TGST, DGAD, and KGGG. Glu104 serves as the catalytic Proton acceptor. Lys122 contributes to the substrate binding site.

Belongs to the ribose 5-phosphate isomerase family. In terms of assembly, homodimer.

The enzyme catalyses aldehydo-D-ribose 5-phosphate = D-ribulose 5-phosphate. It participates in carbohydrate degradation; pentose phosphate pathway; D-ribose 5-phosphate from D-ribulose 5-phosphate (non-oxidative stage): step 1/1. Functionally, catalyzes the reversible conversion of ribose-5-phosphate to ribulose 5-phosphate. The chain is Ribose-5-phosphate isomerase A from Lactococcus lactis subsp. cremoris (strain MG1363).